Here is a 378-residue protein sequence, read N- to C-terminus: Polar flagellin B/D (378 aa).

Coiled coils occupy residues 103 to 128 (SNSK…RIAE) and 311 to 340 (AFQN…IKDT).

The protein belongs to the bacterial flagellin family. Heteromer of multiple flagellin subunits including FlaA, FlaB/D, FlaC, FlaE and FlaF.

Its subcellular location is the secreted. The protein resides in the bacterial flagellum. In terms of biological role, flagellin is the subunit protein which polymerizes to form the filaments of bacterial flagella. FlaB/D is not essential for polar flagellar synthesis and swimming motility. Homomer of FlaB/D is not able to form a functional filament. This is Polar flagellin B/D (flaB) from Vibrio parahaemolyticus serotype O3:K6 (strain RIMD 2210633).